The sequence spans 69 residues: Large ribosomal subunit protein bL31 (69 aa).

Zn(2+)-binding residues include C16, C18, C38, and C41.

It belongs to the bacterial ribosomal protein bL31 family. Type A subfamily. As to quaternary structure, part of the 50S ribosomal subunit. Zn(2+) serves as cofactor.

Binds the 23S rRNA. This Thermobifida fusca (strain YX) protein is Large ribosomal subunit protein bL31.